Reading from the N-terminus, the 334-residue chain is MKTKRVTIKDIAELAGVSKATASLVLNGRGKELRVAQETRERVLAIAREQHYQPSIHARSLRDNRSHTIGLVVPEITNYGFAVFSHELETLCREAGVQLLISCTDENPGQESVVVNNMIARQVDGLIVASCMHSDADYQKLSEQLPVVLFDRSPSDSALPLVMTDSVTPTAELISRIAPQHADEFWFLGGQPRLSPSRDRLAGFTQGLAQAGITLRPEWVINGNYHPSSGYEMFAALCARLGRPPKALFTAACGLLEGVLRYMSQHHLLDSNIHLASFDDHYLYDSLSLRIDTVQQDNRQLAWHCYDLLSQLIDGQAPEPLQRYLPATLQIRHP.

One can recognise an HTH lacI-type domain in the interval Val6 to Asp63. The H-T-H motif DNA-binding region spans Ile8–Asn27.

Its function is as follows. Repressor for the scr operon. Binds D-fructose as an inducer. The chain is Sucrose operon repressor (scrR) from Klebsiella pneumoniae.